The sequence spans 90 residues: Probable Fe(2+)-trafficking protein (90 aa).

Belongs to the Fe(2+)-trafficking protein family.

Could be a mediator in iron transactions between iron acquisition and iron-requiring processes, such as synthesis and/or repair of Fe-S clusters in biosynthetic enzymes. This is Probable Fe(2+)-trafficking protein from Chromohalobacter salexigens (strain ATCC BAA-138 / DSM 3043 / CIP 106854 / NCIMB 13768 / 1H11).